A 108-amino-acid polypeptide reads, in one-letter code: MAVWIQAGALLFLLAVSSVNANAGAPQHLCGSHLVDALYLVCGPTGFFYNPKRDVDPPLGFLPPKSAQETEVADFAFKDHAEVIRKRGIVEQCCHKPCSIFELQNYCN.

An N-terminal signal peptide occupies residues 1-21; sequence MAVWIQAGALLFLLAVSSVNA. Disulfide bonds link Cys30–Cys94, Cys42–Cys107, and Cys93–Cys98. The propeptide at 54–85 is c peptide; it reads DVDPPLGFLPPKSAQETEVADFAFKDHAEVIR.

This sequence belongs to the insulin family. In terms of assembly, heterodimer of a B chain and an A chain linked by two disulfide bonds.

It localises to the secreted. Its function is as follows. Insulin decreases blood glucose concentration. It increases cell permeability to monosaccharides, amino acids and fatty acids. It accelerates glycolysis, the pentose phosphate cycle, and glycogen synthesis in liver. The sequence is that of Insulin (ins) from Cyprinus carpio (Common carp).